Here is an 873-residue protein sequence, read N- to C-terminus: Polyribonucleotide nucleotidyltransferase (873 aa).

Asp521 and Asp527 together coordinate Mg(2+). The KH domain maps to 587–646 (PRIITTTVPVDKIGEVIGPKGKMINQIQEDTGAEIAIEDDGTVYISSEGGEAAEKAKQII). One can recognise an S1 motif domain in the interval 658–730 (GETYKGTVVK…DRGKISLAIP (73 aa)). Residues 727 to 873 (LAIPGFENQE…VRRDFDPFDD (147 aa)) are disordered. Basic and acidic residues predominate over residues 742–857 (RRSDDRPRRD…EYREGREVRH (116 aa)).

The protein belongs to the polyribonucleotide nucleotidyltransferase family. Requires Mg(2+) as cofactor.

It localises to the cytoplasm. The enzyme catalyses RNA(n+1) + phosphate = RNA(n) + a ribonucleoside 5'-diphosphate. Involved in mRNA degradation. Catalyzes the phosphorolysis of single-stranded polyribonucleotides processively in the 3'- to 5'-direction. This chain is Polyribonucleotide nucleotidyltransferase, found in Bifidobacterium animalis subsp. lactis (strain AD011).